We begin with the raw amino-acid sequence, 131 residues long: Large ribosomal subunit protein bL17 (131 aa).

The protein belongs to the bacterial ribosomal protein bL17 family. As to quaternary structure, part of the 50S ribosomal subunit. Contacts protein L32.

In Hamiltonella defensa subsp. Acyrthosiphon pisum (strain 5AT), this protein is Large ribosomal subunit protein bL17.